The following is a 150-amino-acid chain: NADH-quinone oxidoreductase subunit A (150 aa).

Helical transmembrane passes span 14–34 (FAVF…GAFF), 66–86 (FYLV…LYAW), and 96–116 (IGFI…VYLV).

Belongs to the complex I subunit 3 family. In terms of assembly, NDH-1 is composed of 13 different subunits. Subunits NuoA, H, J, K, L, M, N constitute the membrane sector of the complex.

The protein resides in the cell inner membrane. The catalysed reaction is a quinone + NADH + 5 H(+)(in) = a quinol + NAD(+) + 4 H(+)(out). Its function is as follows. NDH-1 shuttles electrons from NADH, via FMN and iron-sulfur (Fe-S) centers, to quinones in the respiratory chain. The immediate electron acceptor for the enzyme in this species is believed to be ubiquinone. Couples the redox reaction to proton translocation (for every two electrons transferred, four hydrogen ions are translocated across the cytoplasmic membrane), and thus conserves the redox energy in a proton gradient. This chain is NADH-quinone oxidoreductase subunit A, found in Yersinia enterocolitica serotype O:8 / biotype 1B (strain NCTC 13174 / 8081).